Here is a 359-residue protein sequence, read N- to C-terminus: MSDKNQIIARASLIEQLVSKRYFEDIGKQLTELEMIYVSKEHLQETDVVRAVYRVLKNCPSVTLKKKAKCLLAKWRGFYKSTHCKPRQSPKVLHTNANKEESAAVSQDVSQDETSGSSHSEIMGLCSSLSRLLPQDAAKPAAAIGSESSTAQMEINEGYLKGDDSECTRKSSGVFQGTLVSVRSKCVELLYTALASSCTDHTEVHIWQNLAREIEEHIFTLHSNNIKKYKTSIRSKVANLKNPRNFHLQQNFLSGTMSAREFAEMSVLDMASQELKQLRASYTESSIQEHCLPQSVDGTWTNKIKCRRCDKYNCKVTVIARGTLFLPSWVQNSNPDEQMTYVICNECGEQWYHNNWVCL.

The TFIIS N-terminal domain maps to 1-82 (MSDKNQIIAR…AKWRGFYKST (82 aa)). The disordered stretch occupies residues 84–118 (CKPRQSPKVLHTNANKEESAAVSQDVSQDETSGSS). Residues 104-118 (AVSQDVSQDETSGSS) are compositionally biased toward polar residues. The TFIIS central domain maps to 182–298 (VRSKCVELLY…EHCLPQSVDG (117 aa)).

The protein is Transcription elongation factor A N-terminal and central domain-containing protein (Tceanc) of Mus musculus (Mouse).